The sequence spans 305 residues: Probable GTP 3',8-cyclase (305 aa).

The Radical SAM core domain occupies 6 to 228 (NHRRPLVSLR…MTRKFMQDRK (223 aa)). Arg15 contributes to the GTP binding site. Residues Cys22 and Cys26 each contribute to the [4Fe-4S] cluster site. Tyr28 serves as a coordination point for S-adenosyl-L-methionine. Residue Cys29 participates in [4Fe-4S] cluster binding. Residue Arg62 participates in GTP binding. Gly66 is an S-adenosyl-L-methionine binding site. Residue Thr92 participates in GTP binding. Position 116 (Ser116) interacts with S-adenosyl-L-methionine. GTP is bound at residue Lys153. [4Fe-4S] cluster is bound by residues Cys249 and Cys252. Residue 254-256 (RLR) participates in GTP binding. Cys266 lines the [4Fe-4S] cluster pocket.

This sequence belongs to the radical SAM superfamily. MoaA family. [4Fe-4S] cluster serves as cofactor.

The catalysed reaction is GTP + AH2 + S-adenosyl-L-methionine = (8S)-3',8-cyclo-7,8-dihydroguanosine 5'-triphosphate + 5'-deoxyadenosine + L-methionine + A + H(+). It participates in cofactor biosynthesis; molybdopterin biosynthesis. Functionally, catalyzes the cyclization of GTP to (8S)-3',8-cyclo-7,8-dihydroguanosine 5'-triphosphate. This is Probable GTP 3',8-cyclase from Methanothermobacter marburgensis (strain ATCC BAA-927 / DSM 2133 / JCM 14651 / NBRC 100331 / OCM 82 / Marburg) (Methanobacterium thermoautotrophicum).